A 470-amino-acid chain; its full sequence is 3-isopropylmalate dehydratase large subunit (470 aa).

Residues C351, C411, and C414 each contribute to the [4Fe-4S] cluster site.

This sequence belongs to the aconitase/IPM isomerase family. LeuC type 1 subfamily. In terms of assembly, heterodimer of LeuC and LeuD. It depends on [4Fe-4S] cluster as a cofactor.

The enzyme catalyses (2R,3S)-3-isopropylmalate = (2S)-2-isopropylmalate. The protein operates within amino-acid biosynthesis; L-leucine biosynthesis; L-leucine from 3-methyl-2-oxobutanoate: step 2/4. Functionally, catalyzes the isomerization between 2-isopropylmalate and 3-isopropylmalate, via the formation of 2-isopropylmaleate. This Rhodopseudomonas palustris (strain BisA53) protein is 3-isopropylmalate dehydratase large subunit.